Consider the following 354-residue polypeptide: Homeobox-leucine zipper protein HOX27 (354 aa).

The disordered stretch occupies residues 98–175 (SVAAGAPGME…DDEGASARKK (78 aa)). Residues 148 to 157 (QGGGGGGGGE) show a composition bias toward gly residues. The homeobox DNA-binding region spans 171 to 230 (SARKKLRLSKEQSAFLEESFKEHSTLNPKQKVALAKQLNLRPRQVEVWFQNRRARTKLKQ). A leucine-zipper region spans residues 229 to 273 (KQTEVDCEYLKRCCETLTEENRRLHKELAELRALKTARPFYMHLP). The segment at 294 to 323 (STSAPAAATSPAAAPTAAARTAVASPEPHR) is disordered.

This sequence belongs to the HD-ZIP homeobox family. Class II subfamily. In terms of tissue distribution, expressed in seedlings, roots, stems, leaf sheaths and blades and panicles.

The protein resides in the nucleus. Functionally, probable transcription factor. The chain is Homeobox-leucine zipper protein HOX27 (HOX27) from Oryza sativa subsp. indica (Rice).